A 351-amino-acid chain; its full sequence is Cell shape-determining protein MreB (351 aa).

ATP-binding positions include 20 to 22 (TAN), 169 to 171 (GGT), 217 to 220 (ERIK), and 299 to 302 (GGAL).

It belongs to the FtsA/MreB family. Forms polymers.

Its subcellular location is the cytoplasm. In terms of biological role, forms membrane-associated dynamic filaments that are essential for cell shape determination. Acts by regulating cell wall synthesis and cell elongation, and thus cell shape. A feedback loop between cell geometry and MreB localization may maintain elongated cell shape by targeting cell wall growth to regions of negative cell wall curvature. This chain is Cell shape-determining protein MreB, found in Haemophilus influenzae (strain ATCC 51907 / DSM 11121 / KW20 / Rd).